The primary structure comprises 204 residues: 8-oxoguanine DNA glycosylase/AP lyase (204 aa).

Active-site residues include Lys128 and Asp146.

It belongs to the type-2 OGG1 family.

The enzyme catalyses 2'-deoxyribonucleotide-(2'-deoxyribose 5'-phosphate)-2'-deoxyribonucleotide-DNA = a 3'-end 2'-deoxyribonucleotide-(2,3-dehydro-2,3-deoxyribose 5'-phosphate)-DNA + a 5'-end 5'-phospho-2'-deoxyribonucleoside-DNA + H(+). Functionally, catalyzes the excision of an oxidatively damaged form of guanine (7,8-dihydro-8-oxoguanine = 8-oxoG) from DNA. Also cleaves the DNA backbone at apurinic/apyrimidinic sites (AP sites). In Sulfurisphaera tokodaii (strain DSM 16993 / JCM 10545 / NBRC 100140 / 7) (Sulfolobus tokodaii), this protein is 8-oxoguanine DNA glycosylase/AP lyase.